Consider the following 188-residue polypeptide: Large ribosomal subunit protein bL35m (188 aa).

Belongs to the bacterial ribosomal protein bL35 family.

The protein localises to the mitochondrion. This chain is Large ribosomal subunit protein bL35m (MRPL35), found in Bos taurus (Bovine).